Here is a 1464-residue protein sequence, read N- to C-terminus: Alpha-glucan water dikinase, chloroplastic (1464 aa).

Residues 1-77 (MSNSLGNNLL…KRAFSSSPHA (77 aa)) constitute a chloroplast transit peptide. H1069 (tele-phosphohistidine intermediate) is an active-site residue.

It belongs to the PEP-utilizing enzyme family. Homodimer. The cofactor is Mg(2+). Expressed in leaves.

It is found in the plastid. Its subcellular location is the chloroplast. The catalysed reaction is [(1-&gt;4)-alpha-D-glucosyl](n) + n ATP + n H2O = [(1-&gt;4)-6-phospho-alpha-D-glucosyl](n) + n AMP + n phosphate + 2n H(+). The enzyme catalyses ATP + protein L-histidine = ADP + protein N-phospho-L-histidine.. Its function is as follows. Mediates the incorporation of phosphate into starch-like alpha-glucan, mostly at the C-6 position of glucose units. Acts as an overall regulator of starch mobilization. Required for starch degradation, suggesting that the phosphate content of starch regulates its degradability. More active on alpha-1,6 branched amylopectin. The protein is Alpha-glucan water dikinase, chloroplastic (R1) of Solanum tuberosum (Potato).